The following is a 552-amino-acid chain: Hydroxylamine reductase (552 aa).

[2Fe-2S] cluster contacts are provided by C5, C8, C20, and C27. H251, E275, C319, C407, C435, C460, E494, and K496 together coordinate hybrid [4Fe-2O-2S] cluster. C407 is modified (cysteine persulfide).

The protein belongs to the HCP family. Requires [2Fe-2S] cluster as cofactor. The cofactor is hybrid [4Fe-2O-2S] cluster.

It is found in the cytoplasm. The catalysed reaction is A + NH4(+) + H2O = hydroxylamine + AH2 + H(+). In terms of biological role, catalyzes the reduction of hydroxylamine to form NH(3) and H(2)O. The polypeptide is Hydroxylamine reductase (Shigella flexneri).